We begin with the raw amino-acid sequence, 70 residues long: Large ribosomal subunit protein uL29 (70 aa).

This sequence belongs to the universal ribosomal protein uL29 family.

The polypeptide is Large ribosomal subunit protein uL29 (Thermosynechococcus vestitus (strain NIES-2133 / IAM M-273 / BP-1)).